The chain runs to 264 residues: MTLPTTIYSFPAYLSRFSSTDKPVKLKFHQYARATLLSNRGRDHNCDGRRTVEIHKLDLSDWQAFNKLATRCNAYDGITMNGDNSFGWNHEATLDNIHAQKYNKAYAGARLTAELKYLLQDVESFEPNSKYTIHEVVLGPGYGTPDYTGQTIGYVVTLPAQMPNCWSSELPTIDLYIDQLRTVTGVSNALGFIIAALLNAYSDLPHDLKIGLRSLSSSAAIYSGLGFERVPQERDISCARMYLTPANHPDLWTQENGEWIYLRN.

A helical transmembrane segment spans residues 182-198 (TVTGVSNALGFIIAALL).

The protein to E.coli YjiC.

It localises to the membrane. This is an uncharacterized protein from Escherichia coli (strain K12).